The following is a 580-amino-acid chain: Phosphatase and actin regulator 1 (580 aa).

Serine 67 and serine 78 each carry phosphoserine. Threonine 104 bears the Phosphothreonine mark. A Nuclear localization signal motif is present at residues 108-129 (RRRSKFANLGRIFKPWKWRKKK). The RPEL 1 repeat unit spans residues 138–163 (AALERKISMRQSREELIKRGVLKEIY). 2 disordered regions span residues 331 to 355 (EQRV…TKAG) and 376 to 410 (KENV…SSLY). A compositionally biased stretch (polar residues) spans 335-345 (PCSTSYHSSGL). Over residues 395–407 (EEEEEEEDEDDDS) the composition is skewed to acidic residues. 3 RPEL repeats span residues 422–447 (DSLA…PRQT), 460–484 (TKLT…LKPR), and 498–523 (RRLT…IRFS). The interval 462–494 (LTRRLSQRPTAEELEQRNILKPRNEQEEQEEKR) is disordered. Serine 467 carries the phosphoserine modification. Over residues 471 to 494 (TAEELEQRNILKPRNEQEEQEEKR) the composition is skewed to basic and acidic residues. Position 505 is a phosphoserine (serine 505).

The protein belongs to the phosphatase and actin regulator family. As to quaternary structure, interacts (via RPEL repeats) with ACTA1 and PPP1CA; ACTA1 and PPP1CA compete for the same binding site. In terms of tissue distribution, detected in umbilical vein endothelial cells.

Its subcellular location is the cytoplasm. The protein localises to the synapse. It is found in the nucleus. Functionally, binds actin monomers (G actin) and plays a role in multiple processes including the regulation of actin cytoskeleton dynamics, actin stress fibers formation, cell motility and survival, formation of tubules by endothelial cells, and regulation of PPP1CA activity. Involved in the regulation of cortical neuron migration and dendrite arborization. The chain is Phosphatase and actin regulator 1 (PHACTR1) from Homo sapiens (Human).